The following is a 104-amino-acid chain: Zinc finger C2H2 protein ECU02_0310 (104 aa).

The C2H2-type zinc-finger motif lies at Phe56–His80.

The protein belongs to the ZNF593/BUD20 C2H2-type zinc-finger protein family. As to quaternary structure, associates with pre-60S ribosomal particles; released from the pre-60S particle very early in the cytoplasm.

The protein localises to the nucleus. Its subcellular location is the cytoplasm. Its function is as follows. Involved in pre-60S ribosomal particles maturation by promoting the nuclear export of the 60S ribosome. The protein is Zinc finger C2H2 protein ECU02_0310 of Encephalitozoon cuniculi (strain GB-M1) (Microsporidian parasite).